We begin with the raw amino-acid sequence, 443 residues long: D-lactate dehydrogenase (443 aa).

The Extracellular portion of the chain corresponds to Met-1–Gly-182. An FAD-binding PCMH-type domain is found at Arg-32–Gln-209. A helical transmembrane segment spans residues Tyr-183–Thr-203. Over Ile-204 to Lys-383 the chain is Cytoplasmic. A helical membrane pass occupies residues Ser-384–Ala-404. Over Val-405 to Leu-443 the chain is Extracellular.

It belongs to the FAD-binding oxidoreductase/transferase type 4 family. Requires FAD as cofactor. It depends on Zn(2+) as a cofactor.

It is found in the cell membrane. It carries out the reaction (R)-lactate + A = pyruvate + AH2. Catalyzes the dehydrogenation of (R)-lactate (D-lactate) to pyruvate. Is likely involved in the utilization of D-lactate as a sole source for both carbon and electrons for dissimilatory sulfate reduction. Cannot use L-lactate as substrate, and NAD(+), horse cytochrome c, methylene blue or dimethylnaphthoquinone as acceptors. Active in vitro with artificial electron acceptors such as 2,6-dichlorophenolindophenol (DCPIP); the physiological acceptor is not known, but potential acceptors include cytochromes or quinones. The chain is D-lactate dehydrogenase from Archaeoglobus fulgidus (strain ATCC 49558 / DSM 4304 / JCM 9628 / NBRC 100126 / VC-16).